The primary structure comprises 82 residues: Large ribosomal subunit protein uL23 (82 aa).

This sequence belongs to the universal ribosomal protein uL23 family. Part of the 50S ribosomal subunit. Contacts protein L29.

Functionally, binds to 23S rRNA. One of the proteins that surrounds the polypeptide exit tunnel on the outside of the ribosome. In Methanococcoides burtonii (strain DSM 6242 / NBRC 107633 / OCM 468 / ACE-M), this protein is Large ribosomal subunit protein uL23.